We begin with the raw amino-acid sequence, 302 residues long: 4-hydroxy-tetrahydrodipicolinate synthase (302 aa).

Threonine 55 lines the pyruvate pocket. Tyrosine 144 acts as the Proton donor/acceptor in catalysis. Lysine 172 (schiff-base intermediate with substrate) is an active-site residue. Valine 214 contributes to the pyruvate binding site.

This sequence belongs to the DapA family. In terms of assembly, homotetramer; dimer of dimers.

The protein localises to the cytoplasm. It catalyses the reaction L-aspartate 4-semialdehyde + pyruvate = (2S,4S)-4-hydroxy-2,3,4,5-tetrahydrodipicolinate + H2O + H(+). Its pathway is amino-acid biosynthesis; L-lysine biosynthesis via DAP pathway; (S)-tetrahydrodipicolinate from L-aspartate: step 3/4. Its function is as follows. Catalyzes the condensation of (S)-aspartate-beta-semialdehyde [(S)-ASA] and pyruvate to 4-hydroxy-tetrahydrodipicolinate (HTPA). The polypeptide is 4-hydroxy-tetrahydrodipicolinate synthase (Synechococcus sp. (strain CC9311)).